A 100-amino-acid chain; its full sequence is Putative pterin-4-alpha-carbinolamine dehydratase 2 (100 aa).

The protein belongs to the pterin-4-alpha-carbinolamine dehydratase family.

It carries out the reaction (4aS,6R)-4a-hydroxy-L-erythro-5,6,7,8-tetrahydrobiopterin = (6R)-L-erythro-6,7-dihydrobiopterin + H2O. The polypeptide is Putative pterin-4-alpha-carbinolamine dehydratase 2 (Cupriavidus pinatubonensis (strain JMP 134 / LMG 1197) (Cupriavidus necator (strain JMP 134))).